Here is a 430-residue protein sequence, read N- to C-terminus: Glutamate-1-semialdehyde 2,1-aminomutase (430 aa).

Lysine 265 is subject to N6-(pyridoxal phosphate)lysine.

This sequence belongs to the class-III pyridoxal-phosphate-dependent aminotransferase family. HemL subfamily. Homodimer. The cofactor is pyridoxal 5'-phosphate.

It localises to the cytoplasm. It catalyses the reaction (S)-4-amino-5-oxopentanoate = 5-aminolevulinate. Its pathway is porphyrin-containing compound metabolism; protoporphyrin-IX biosynthesis; 5-aminolevulinate from L-glutamyl-tRNA(Glu): step 2/2. The sequence is that of Glutamate-1-semialdehyde 2,1-aminomutase from Shewanella baltica (strain OS223).